Reading from the N-terminus, the 380-residue chain is Queuine tRNA-ribosyltransferase (380 aa).

D96 (proton acceptor) is an active-site residue. Residues D96 to F100, D150, Q193, and G220 contribute to the substrate site. An RNA binding region spans residues G251–S257. Catalysis depends on D270, which acts as the Nucleophile. Residues T275–R279 form an RNA binding; important for wobble base 34 recognition region. Residues C308, C310, C313, and H339 each coordinate Zn(2+).

Belongs to the queuine tRNA-ribosyltransferase family. Homodimer. Within each dimer, one monomer is responsible for RNA recognition and catalysis, while the other monomer binds to the replacement base PreQ1. Zn(2+) serves as cofactor.

It catalyses the reaction 7-aminomethyl-7-carbaguanine + guanosine(34) in tRNA = 7-aminomethyl-7-carbaguanosine(34) in tRNA + guanine. Its pathway is tRNA modification; tRNA-queuosine biosynthesis. In terms of biological role, catalyzes the base-exchange of a guanine (G) residue with the queuine precursor 7-aminomethyl-7-deazaguanine (PreQ1) at position 34 (anticodon wobble position) in tRNAs with GU(N) anticodons (tRNA-Asp, -Asn, -His and -Tyr). Catalysis occurs through a double-displacement mechanism. The nucleophile active site attacks the C1' of nucleotide 34 to detach the guanine base from the RNA, forming a covalent enzyme-RNA intermediate. The proton acceptor active site deprotonates the incoming PreQ1, allowing a nucleophilic attack on the C1' of the ribose to form the product. After dissociation, two additional enzymatic reactions on the tRNA convert PreQ1 to queuine (Q), resulting in the hypermodified nucleoside queuosine (7-(((4,5-cis-dihydroxy-2-cyclopenten-1-yl)amino)methyl)-7-deazaguanosine). The polypeptide is Queuine tRNA-ribosyltransferase (Streptococcus suis (strain 98HAH33)).